Reading from the N-terminus, the 244-residue chain is Pyridoxine 5'-phosphate synthase (244 aa).

Asparagine 12 contributes to the 3-amino-2-oxopropyl phosphate binding site. 14 to 15 (DH) contacts 1-deoxy-D-xylulose 5-phosphate. 3-amino-2-oxopropyl phosphate is bound at residue arginine 23. The active-site Proton acceptor is the histidine 48. The 1-deoxy-D-xylulose 5-phosphate site is built by arginine 50 and histidine 55. Catalysis depends on glutamate 75, which acts as the Proton acceptor. Residue threonine 105 coordinates 1-deoxy-D-xylulose 5-phosphate. Histidine 196 functions as the Proton donor in the catalytic mechanism. 3-amino-2-oxopropyl phosphate contacts are provided by residues glycine 197 and 218–219 (GH).

The protein belongs to the PNP synthase family. Homooctamer; tetramer of dimers.

Its subcellular location is the cytoplasm. It catalyses the reaction 3-amino-2-oxopropyl phosphate + 1-deoxy-D-xylulose 5-phosphate = pyridoxine 5'-phosphate + phosphate + 2 H2O + H(+). Its pathway is cofactor biosynthesis; pyridoxine 5'-phosphate biosynthesis; pyridoxine 5'-phosphate from D-erythrose 4-phosphate: step 5/5. Functionally, catalyzes the complicated ring closure reaction between the two acyclic compounds 1-deoxy-D-xylulose-5-phosphate (DXP) and 3-amino-2-oxopropyl phosphate (1-amino-acetone-3-phosphate or AAP) to form pyridoxine 5'-phosphate (PNP) and inorganic phosphate. The chain is Pyridoxine 5'-phosphate synthase from Alcanivorax borkumensis (strain ATCC 700651 / DSM 11573 / NCIMB 13689 / SK2).